Here is a 252-residue protein sequence, read N- to C-terminus: Adenosylcobinamide-GDP ribazoletransferase (252 aa).

5 helical membrane-spanning segments follow: residues 33–53 (FISPLMVGIITGIIDWFVVLL), 105–125 (TGSGAIGLFLVYFSIFLIATL), 132–152 (LWFFLPSEVLARASAISLLGL), 184–204 (FAILFSSPVLILAYVILLLVF), and 215–235 (MSGDIVGAIITLSFPIYLLVA).

It belongs to the CobS family. The cofactor is Mg(2+).

The protein localises to the cell membrane. It catalyses the reaction alpha-ribazole + adenosylcob(III)inamide-GDP = adenosylcob(III)alamin + GMP + H(+). The catalysed reaction is alpha-ribazole 5'-phosphate + adenosylcob(III)inamide-GDP = adenosylcob(III)alamin 5'-phosphate + GMP + H(+). The protein operates within cofactor biosynthesis; adenosylcobalamin biosynthesis; adenosylcobalamin from cob(II)yrinate a,c-diamide: step 7/7. Joins adenosylcobinamide-GDP and alpha-ribazole to generate adenosylcobalamin (Ado-cobalamin). Also synthesizes adenosylcobalamin 5'-phosphate from adenosylcobinamide-GDP and alpha-ribazole 5'-phosphate. The protein is Adenosylcobinamide-GDP ribazoletransferase of Sulfolobus acidocaldarius (strain ATCC 33909 / DSM 639 / JCM 8929 / NBRC 15157 / NCIMB 11770).